The primary structure comprises 251 residues: tRNA (guanine-N(1)-)-methyltransferase (251 aa).

S-adenosyl-L-methionine is bound by residues G113 and 133 to 138 (MGDYVL).

It belongs to the RNA methyltransferase TrmD family. In terms of assembly, homodimer.

It localises to the cytoplasm. It carries out the reaction guanosine(37) in tRNA + S-adenosyl-L-methionine = N(1)-methylguanosine(37) in tRNA + S-adenosyl-L-homocysteine + H(+). Its function is as follows. Specifically methylates guanosine-37 in various tRNAs. The chain is tRNA (guanine-N(1)-)-methyltransferase from Sodalis glossinidius (strain morsitans).